The primary structure comprises 364 residues: Natterin-3 (364 aa).

Residues 1-18 (MKLSVLVVTLLAVSWTSA) form the signal peptide. A propeptide spanning residues 19-42 (QPETFSIQTKEANMNPEPANIRVA) is cleaved from the precursor.

The protein belongs to the natterin family. Contains 4 disulfide bonds. Expressed by the venom gland.

Its subcellular location is the secreted. Its activity is regulated as follows. Inhibited by tissue-kallikrein inhibitor TKI and trasylol. Plasma kallikrein inhibitor PKSI527 and classical inhibitors of serine-, metallo-, thiol- or aspartate-peptidases evokes a minor inhibition of the peptide digestion. Shows nociceptive, edema-inducing and kininogenase activity with release of kallidin from low molecular weight kininogen. The cleavage occurs at Met-Lys bonds. This chain is Natterin-3, found in Thalassophryne nattereri (Copper Joe toadfish).